Consider the following 417-residue polypeptide: NADH-quinone oxidoreductase subunit D (417 aa).

This sequence belongs to the complex I 49 kDa subunit family. In terms of assembly, NDH-1 is composed of 14 different subunits. Subunits NuoB, C, D, E, F, and G constitute the peripheral sector of the complex.

It is found in the cell inner membrane. The catalysed reaction is a quinone + NADH + 5 H(+)(in) = a quinol + NAD(+) + 4 H(+)(out). NDH-1 shuttles electrons from NADH, via FMN and iron-sulfur (Fe-S) centers, to quinones in the respiratory chain. The immediate electron acceptor for the enzyme in this species is believed to be ubiquinone. Couples the redox reaction to proton translocation (for every two electrons transferred, four hydrogen ions are translocated across the cytoplasmic membrane), and thus conserves the redox energy in a proton gradient. This Burkholderia orbicola (strain MC0-3) protein is NADH-quinone oxidoreductase subunit D.